An 89-amino-acid polypeptide reads, in one-letter code: Small ribosomal subunit protein uS15 (89 aa).

This sequence belongs to the universal ribosomal protein uS15 family. In terms of assembly, part of the 30S ribosomal subunit. Forms a bridge to the 50S subunit in the 70S ribosome, contacting the 23S rRNA.

In terms of biological role, one of the primary rRNA binding proteins, it binds directly to 16S rRNA where it helps nucleate assembly of the platform of the 30S subunit by binding and bridging several RNA helices of the 16S rRNA. Forms an intersubunit bridge (bridge B4) with the 23S rRNA of the 50S subunit in the ribosome. In Prochlorococcus marinus (strain MIT 9515), this protein is Small ribosomal subunit protein uS15.